We begin with the raw amino-acid sequence, 380 residues long: Chaperone protein DnaJ (380 aa).

One can recognise a J domain in the interval 5–70; sequence DYYEILGVAK…QKRAAYDQYG (66 aa). The CR-type zinc finger occupies 135-213; it reads GVSKEIRIPT…CHGHGRVEKS (79 aa). The Zn(2+) site is built by Cys148, Cys151, Cys165, Cys168, Cys187, Cys190, Cys201, and Cys204. CXXCXGXG motif repeat units follow at residues 148-155, 165-172, 187-194, and 201-208; these read CGVCHGSG, CSTCHGAG, CPTCHGRG, and CNACHGHG.

Belongs to the DnaJ family. In terms of assembly, homodimer. The cofactor is Zn(2+).

The protein localises to the cytoplasm. In terms of biological role, participates actively in the response to hyperosmotic and heat shock by preventing the aggregation of stress-denatured proteins and by disaggregating proteins, also in an autonomous, DnaK-independent fashion. Unfolded proteins bind initially to DnaJ; upon interaction with the DnaJ-bound protein, DnaK hydrolyzes its bound ATP, resulting in the formation of a stable complex. GrpE releases ADP from DnaK; ATP binding to DnaK triggers the release of the substrate protein, thus completing the reaction cycle. Several rounds of ATP-dependent interactions between DnaJ, DnaK and GrpE are required for fully efficient folding. Also involved, together with DnaK and GrpE, in the DNA replication of plasmids through activation of initiation proteins. The sequence is that of Chaperone protein DnaJ from Erwinia tasmaniensis (strain DSM 17950 / CFBP 7177 / CIP 109463 / NCPPB 4357 / Et1/99).